A 401-amino-acid polypeptide reads, in one-letter code: MAELHASLPITLRCGLTLPNRLVKASMSEGISAAGSLPDMKIRNIYQRWAKGGWGMVITGNVQVDDRYLGTANDLAVDSRASDDTIVASWSRWAKVCRQHGTPTLVQLNHPGRQCPIGAGTHGYLSKNVAPTSIGLHMGDGLIPKAVSAIAFGKPRELEIAEIRTITQQFARAARLAYRSGFAGVEIHAAHGYLIDEFLTERTNRRSDAYGGSTERRAKFLIDIISAVRSEVPSSFCVGVTINSVDSVFPEILVDRVRQLELVTSAGVDFIEISGGTFEDPLMFLGPPKPSSSANMEHSEAYFVDFAKVVASKFPDVPLLLTGGFRCRESIEKAVTNGACSMVGIARPAAVNPLLPKTVMFNHEVKDSDATLYSPKIEAPWLIRQMGITALSVHMDNVSSF.

Residues 25 to 28 and Q107 contribute to the FMN site; that span reads ASMS. Residue 188-191 participates in substrate binding; sequence HAAH. 346 to 347 is an FMN binding site; sequence AR.

Belongs to the NADH:flavin oxidoreductase/NADH oxidase family.

NADH-dependent flavin oxidoreductase; part of the gene cluster that mediates the biosynthesis of ilicicolin H, a 4-hydroxy-2-pyridonealkaloid that has potent and broad antifungal activities by inhibiting the mitochondrial respiration chain. The biosynthesis of ilicicolin H starts with formation of the tetramic acid by the hybrid PKS-NRPS synthetase iliA with the partnering trans-enoyl reductase iliB since iliA lacks a designated enoylreductase (ER) domain. The cytochrome P450 monooxygenase iliC then catalyzes the ring expansion of the tetramate to the acyclic 2-pyridone. The pericyclase iliD further converts the acyclic 2-pyridone into 8-epi-ilicicolin H. 8-epi-ilicicolin H might then spontaneously convert to ilicicolin H since ilicicolin H is produced in the absence of the epimerase iliE, in contrast to what was observed for the Talaromyces variabilis ilicolin H biosynthetic pathway. This chain is NADH-dependent flavin oxidoreductase iliE, found in Hypocrea jecorina (strain QM6a) (Trichoderma reesei).